The primary structure comprises 630 residues: Zinc finger CW-type PWWP domain protein 1 (630 aa).

Disordered stretches follow at residues 1-99 (MMAA…TSAE) and 130-184 (LDEE…TEPS). Composition is skewed to basic and acidic residues over residues 26–40 (LHSE…KEDA), 59–81 (LKKE…KLKA), and 141–152 (TDKKDADPEKVI). Residues 241–295 (FGHCVIWVQCSSPKCEKWRQLRGNIDPSVLPDDWSCDQNPDPNYNRCDIPEESWA) form a CW-type zinc finger. 4 residues coordinate Zn(2+): cysteine 250, cysteine 255, cysteine 276, and cysteine 287. Residues 308–374 (PGSIIWAKQY…VRMLKNFQEL (67 aa)) enclose the PWWP domain. Positions 430–595 (DLTLCESNNP…FPPDDDCSSD (166 aa)) are disordered. Residues 435–465 (ESNNPESCLEKEEKDLEEEKEEEEEKKDPTL) adopt a coiled-coil conformation. Acidic residues predominate over residues 449–459 (DLEEEKEEEEE). Residues 514 to 527 (GKEEQGNSDLDHPV) are compositionally biased toward basic and acidic residues. Phosphoserine is present on serine 619.

Testis (at protein level). Expressed in thymus, brain, lung, ovary, oviduct and uterus.

It localises to the nucleus. The protein resides in the chromosome. In terms of biological role, dual histone methylation reader specific for PRDM9-catalyzed histone marks (H3K4me3 and H3K36me3) that facilitates the repair of PRDM9-induced meiotic double-strand breaks (DSBs). Essential for male fertility and spermatogenesis. Required for meiosis prophase I progression in male but not in female germ cells. This chain is Zinc finger CW-type PWWP domain protein 1 (Zcwpw1), found in Mus musculus (Mouse).